The chain runs to 496 residues: Cytochrome P450 71D178 (496 aa).

Residues Met1–Met21 traverse the membrane as a helical; Signal-anchor for type II membrane protein segment. Cys435 contacts heme.

This sequence belongs to the cytochrome P450 family. It depends on heme as a cofactor. As to expression, expressed in flowers, leaves and stems, especially in glandular trichomes.

It localises to the membrane. It carries out the reaction (4S)-limonene + reduced [NADPH--hemoprotein reductase] + O2 = (1S,5R)-carveol + oxidized [NADPH--hemoprotein reductase] + H2O + H(+). The catalysed reaction is gamma-terpinene + 2 reduced [NADPH--hemoprotein reductase] + 2 O2 = carvacrol + 2 oxidized [NADPH--hemoprotein reductase] + 3 H2O + 2 H(+). It catalyses the reaction gamma-terpinene + 2 reduced [NADPH--hemoprotein reductase] + 2 O2 = thymol + 2 oxidized [NADPH--hemoprotein reductase] + 3 H2O + 2 H(+). The enzyme catalyses (4R)-limonene + reduced [NADPH--hemoprotein reductase] + O2 = (1R,6S)-isopiperitenol + oxidized [NADPH--hemoprotein reductase] + H2O + H(+). Its pathway is secondary metabolite biosynthesis; terpenoid biosynthesis. Functionally, involved in the biosynthesis of phenolic monoterpenes natural products thymol and carvacrol which have a broad range of biological activities acting as antimicrobial compounds, insecticides, antioxidants and pharmaceutical agents. Catalyzes the C2- and C3-hydroxylation of gamma-terpinene to produce carvacrol and thymol, respectively. Also mediates the C6-hydroxylation of (4S)-limonene to form carveol and the C3-hydroxylation of (4R)-limonene to generate (+)-trans-isopiperitenol. This is Cytochrome P450 71D178 from Origanum vulgare (Wild marjoram).